Reading from the N-terminus, the 122-residue chain is Small ribosomal subunit protein uS13 (122 aa).

The tract at residues 96-122 is disordered; it reads LPVHGQRTKTNARTRKGPARTVAGKKK.

It belongs to the universal ribosomal protein uS13 family. In terms of assembly, part of the 30S ribosomal subunit. Forms a loose heterodimer with protein S19. Forms two bridges to the 50S subunit in the 70S ribosome.

Located at the top of the head of the 30S subunit, it contacts several helices of the 16S rRNA. In the 70S ribosome it contacts the 23S rRNA (bridge B1a) and protein L5 of the 50S subunit (bridge B1b), connecting the 2 subunits; these bridges are implicated in subunit movement. Contacts the tRNAs in the A and P-sites. The protein is Small ribosomal subunit protein uS13 of Geotalea daltonii (strain DSM 22248 / JCM 15807 / FRC-32) (Geobacter daltonii).